We begin with the raw amino-acid sequence, 288 residues long: Bifunctional protein FolD (288 aa).

NADP(+) is bound by residues 164-166 (GRS) and Val-230.

This sequence belongs to the tetrahydrofolate dehydrogenase/cyclohydrolase family. As to quaternary structure, homodimer.

It catalyses the reaction (6R)-5,10-methylene-5,6,7,8-tetrahydrofolate + NADP(+) = (6R)-5,10-methenyltetrahydrofolate + NADPH. It carries out the reaction (6R)-5,10-methenyltetrahydrofolate + H2O = (6R)-10-formyltetrahydrofolate + H(+). It participates in one-carbon metabolism; tetrahydrofolate interconversion. Catalyzes the oxidation of 5,10-methylenetetrahydrofolate to 5,10-methenyltetrahydrofolate and then the hydrolysis of 5,10-methenyltetrahydrofolate to 10-formyltetrahydrofolate. The protein is Bifunctional protein FolD of Thermomicrobium roseum (strain ATCC 27502 / DSM 5159 / P-2).